We begin with the raw amino-acid sequence, 89 residues long: Mitochondrial import inner membrane translocase subunit Tim9 (89 aa).

Ala-2 is modified (N-acetylalanine). A Twin CX3C motif motif is present at residues 28–52 (CFLDCVKDFTTREVKPEEVTCSEHC). Cystine bridges form between Cys-28-Cys-52 and Cys-32-Cys-48.

It belongs to the small Tim family. In terms of assembly, heterohexamer; composed of 3 copies of TIMM9 and 3 copies of TIMM10/TIM10A, named soluble 70 kDa complex. The complex forms a 6-bladed alpha-propeller structure and associates with the TIMM22 component of the TIM22 complex. Interacts with multi-pass transmembrane proteins in transit. Also forms a complex composed of TIMM9, TIMM10/TIM10A and FXC1/TIM10B.

Its subcellular location is the mitochondrion inner membrane. In terms of biological role, mitochondrial intermembrane chaperone that participates in the import and insertion of multi-pass transmembrane proteins into the mitochondrial inner membrane. May also be required for the transfer of beta-barrel precursors from the TOM complex to the sorting and assembly machinery (SAM complex) of the outer membrane. Acts as a chaperone-like protein that protects the hydrophobic precursors from aggregation and guide them through the mitochondrial intermembrane space. The sequence is that of Mitochondrial import inner membrane translocase subunit Tim9 (Timm9) from Rattus norvegicus (Rat).